Consider the following 455-residue polypeptide: UDP-N-acetylmuramate--L-alanine ligase (455 aa).

109–115 (GTHGKTT) contacts ATP.

This sequence belongs to the MurCDEF family.

The protein localises to the cytoplasm. The enzyme catalyses UDP-N-acetyl-alpha-D-muramate + L-alanine + ATP = UDP-N-acetyl-alpha-D-muramoyl-L-alanine + ADP + phosphate + H(+). Its pathway is cell wall biogenesis; peptidoglycan biosynthesis. Cell wall formation. This is UDP-N-acetylmuramate--L-alanine ligase from Caldicellulosiruptor saccharolyticus (strain ATCC 43494 / DSM 8903 / Tp8T 6331).